A 324-amino-acid polypeptide reads, in one-letter code: Clavaminate synthase 1 (324 aa).

Residues His144, Glu146, and His279 each coordinate Fe cation. Residue Arg293 participates in 2-oxoglutarate binding.

The protein belongs to the clavaminate synthase family. The cofactor is Fe(2+).

The catalysed reaction is deoxyamidinoproclavaminate + 2-oxoglutarate + O2 = amidinoproclavaminate + succinate + CO2. It carries out the reaction proclavaminate + 2-oxoglutarate + O2 = dihydroclavaminate + succinate + CO2 + H2O. The enzyme catalyses dihydroclavaminate + 2-oxoglutarate + O2 = clavaminate + succinate + CO2 + H2O. Its pathway is antibiotic biosynthesis; clavulanate biosynthesis; clavulanate from D-glyceraldehyde 3-phosphate and L-arginine: step 3/8. It functions in the pathway antibiotic biosynthesis; clavulanate biosynthesis; clavulanate from D-glyceraldehyde 3-phosphate and L-arginine: step 5/8. The protein operates within antibiotic biosynthesis; clavulanate biosynthesis; clavulanate from D-glyceraldehyde 3-phosphate and L-arginine: step 6/8. This Streptomyces clavuligerus protein is Clavaminate synthase 1 (cs1).